We begin with the raw amino-acid sequence, 271 residues long: Calretinin (271 aa).

EF-hand domains are found at residues 16 to 51, 63 to 98, 107 to 142, 151 to 186, 195 to 230, and 235 to 270; these read LTAS…LEKA, NFGE…EENF, GSSA…LLKK, KLQE…QENF, LTSE…LYEK, and MNIQ…SEPP. Residues D29, D31, N33, Y35, E40, D76, N78, D80, K82, E87, D120, D122, S124, Y126, E131, D164, N166, D168, K170, E175, D208, D210, S212, Y214, and E219 each contribute to the Ca(2+) site. Y214 bears the Phosphotyrosine mark.

It belongs to the calbindin family. In terms of tissue distribution, widely expressed in central nervous system. Expressed in type I unipolar brush cells of the cerebellum (at protein level).

The protein localises to the synapse. It localises to the cell projection. It is found in the dendrite. In terms of biological role, calcium-binding protein involved in calcium homeostasis and signal transduction. It plays a critical role in buffering intracellular calcium levels and modulating calcium-dependent signaling pathways. Predominantly expressed in specific neuronal populations, influences synaptic plasticity and neuronal excitability, contributing to learning and memory. During embryonic development, it facilitates neuronal differentiation and maturation. The polypeptide is Calretinin (Calb2) (Mus musculus (Mouse)).